Here is a 255-residue protein sequence, read N- to C-terminus: MAALYWQTEGAGNTDLVLLHGWGLNAQVWQSMVVRLAPHFRLHLVDLPGYGRSQGFGPMPLNDMANIVLTQAPERAVWLGWSLGGLVASQIALSAPLRVEKLITVASSPCFSAQDDWPGIKPDVLQGFQQQLSEDFQRTVERFLALQTLGTENARQDARLLKGVVLEQPMPSVDVLNGGLEILREADLRQPLADLTVPLLRLYGALDGLVPRKVAGRLDDEWPNSTSVVMPKAAHAPFISHPDAFTEQVIAFAQA.

The AB hydrolase-1 domain maps to 16–242; it reads LVLLHGWGLN…AAHAPFISHP (227 aa). Substrate-binding positions include Trp-22, 82–83, and 143–147; these read SL and FLALQ. The active-site Nucleophile is the Ser-82. Residues Asp-207 and His-235 contribute to the active site. His-235 is a binding site for substrate.

The protein belongs to the AB hydrolase superfamily. Carboxylesterase BioH family. As to quaternary structure, monomer.

The protein resides in the cytoplasm. It catalyses the reaction 6-carboxyhexanoyl-[ACP] methyl ester + H2O = 6-carboxyhexanoyl-[ACP] + methanol + H(+). It functions in the pathway cofactor biosynthesis; biotin biosynthesis. Functionally, the physiological role of BioH is to remove the methyl group introduced by BioC when the pimeloyl moiety is complete. It allows to synthesize pimeloyl-ACP via the fatty acid synthetic pathway through the hydrolysis of the ester bonds of pimeloyl-ACP esters. In Pectobacterium atrosepticum (strain SCRI 1043 / ATCC BAA-672) (Erwinia carotovora subsp. atroseptica), this protein is Pimeloyl-[acyl-carrier protein] methyl ester esterase.